The following is a 76-amino-acid chain: Dermaseptin-H1 (76 aa).

The N-terminal stretch at 1–22 is a signal peptide; it reads MDILKKSLFIVLFLGLVSLSIC. Residues 23–45 constitute a propeptide that is removed on maturation; it reads EEEKRENEDEEEQEDDEQSEEKR. The disordered stretch occupies residues 25–44; that stretch reads EKRENEDEEEQEDDEQSEEK. Acidic residues predominate over residues 30 to 41; it reads EDEEEQEDDEQS. Gln73 carries the glutamine amide modification. The propeptide occupies 75-76; that stretch reads EQ.

Expressed by the skin glands.

It is found in the secreted. Has antimicrobial activity. This is Dermaseptin-H1 from Pithecopus hypochondrialis (Orange-legged leaf frog).